The chain runs to 700 residues: Glycine--tRNA ligase beta subunit (700 aa).

It belongs to the class-II aminoacyl-tRNA synthetase family. Tetramer of two alpha and two beta subunits.

The protein resides in the cytoplasm. It carries out the reaction tRNA(Gly) + glycine + ATP = glycyl-tRNA(Gly) + AMP + diphosphate. The sequence is that of Glycine--tRNA ligase beta subunit from Magnetococcus marinus (strain ATCC BAA-1437 / JCM 17883 / MC-1).